The chain runs to 290 residues: Tubulin beta-4B chain (290 aa).

The MREI motif motif lies at 1–4 (MREI). Residue glutamine 11 coordinates GTP. Position 55 is a phosphothreonine (threonine 55). Lysine 58 is subject to N6-acetyllysine. 6 residues coordinate GTP: glutamate 69, serine 138, glycine 142, threonine 143, glycine 144, and asparagine 172. Glutamate 69 is a Mg(2+) binding site.

This sequence belongs to the tubulin family. In terms of assembly, dimer of alpha and beta chains. A typical microtubule is a hollow water-filled tube with an outer diameter of 25 nm and an inner diameter of 15 nM. Alpha-beta heterodimers associate head-to-tail to form protofilaments running lengthwise along the microtubule wall with the beta-tubulin subunit facing the microtubule plus end conferring a structural polarity. Microtubules usually have 13 protofilaments but different protofilament numbers can be found in some organisms and specialized cells. Component of sperm flagellar doublet microtubules. Mg(2+) serves as cofactor. Some glutamate residues at the C-terminus are polyglycylated, resulting in polyglycine chains on the gamma-carboxyl group. Glycylation is mainly limited to tubulin incorporated into axonemes (cilia and flagella) whereas glutamylation is prevalent in neuronal cells, centrioles, axonemes, and the mitotic spindle. Both modifications can coexist on the same protein on adjacent residues, and lowering polyglycylation levels increases polyglutamylation, and reciprocally. Cilia and flagella glycylation is required for their stability and maintenance. Flagella glycylation controls sperm motility. Post-translationally, some glutamate residues at the C-terminus are polyglutamylated, resulting in polyglutamate chains on the gamma-carboxyl group. Polyglutamylation plays a key role in microtubule severing by spastin (SPAST). SPAST preferentially recognizes and acts on microtubules decorated with short polyglutamate tails: severing activity by SPAST increases as the number of glutamates per tubulin rises from one to eight, but decreases beyond this glutamylation threshold. Glutamylation is also involved in cilia motility.

It is found in the cytoplasm. Its subcellular location is the cytoskeleton. It localises to the flagellum axoneme. Functionally, tubulin is the major constituent of microtubules, a cylinder consisting of laterally associated linear protofilaments composed of alpha- and beta-tubulin heterodimers. Microtubules grow by the addition of GTP-tubulin dimers to the microtubule end, where a stabilizing cap forms. Below the cap, tubulin dimers are in GDP-bound state, owing to GTPase activity of alpha-tubulin. This chain is Tubulin beta-4B chain (TUBB4B), found in Mesocricetus auratus (Golden hamster).